Consider the following 85-residue polypeptide: uncharacterized protein (85 aa).

It belongs to the YciI family.

This is an uncharacterized protein from Bacillus subtilis (strain 168).